We begin with the raw amino-acid sequence, 227 residues long: 6-phosphogluconolactonase (227 aa).

The protein belongs to the glucosamine/galactosamine-6-phosphate isomerase family. 6-phosphogluconolactonase subfamily.

It catalyses the reaction 6-phospho-D-glucono-1,5-lactone + H2O = 6-phospho-D-gluconate + H(+). It functions in the pathway carbohydrate degradation; pentose phosphate pathway; D-ribulose 5-phosphate from D-glucose 6-phosphate (oxidative stage): step 2/3. Hydrolysis of 6-phosphogluconolactone to 6-phosphogluconate. The chain is 6-phosphogluconolactonase (pgl) from Helicobacter pylori (strain J99 / ATCC 700824) (Campylobacter pylori J99).